Consider the following 698-residue polypeptide: Serotransferrin (698 aa).

A signal peptide spans 1–19 (MRLAVGALLVCAVLGLCLA). 2 Transferrin-like domains span residues 25–347 (VRWC…NLRE) and 361–683 (VKWC…NLRK). 2 disulfide bridges follow: cysteine 28-cysteine 67 and cysteine 38-cysteine 58. Arginine 42 carries the post-translational modification Dimethylated arginine. The O-linked (GalNAc...) serine glycan is linked to serine 51. Fe(3+)-binding residues include aspartate 82 and tyrosine 114. 17 cysteine pairs are disulfide-bonded: cysteine 137/cysteine 213, cysteine 156/cysteine 350, cysteine 177/cysteine 193, cysteine 180/cysteine 198, cysteine 190/cysteine 196, cysteine 246/cysteine 260, cysteine 358/cysteine 615, cysteine 364/cysteine 396, cysteine 374/cysteine 387, cysteine 421/cysteine 693, cysteine 437/cysteine 656, cysteine 469/cysteine 542, cysteine 493/cysteine 684, cysteine 503/cysteine 517, cysteine 514/cysteine 525, cysteine 582/cysteine 596, and cysteine 634/cysteine 639. Hydrogencarbonate is bound by residues threonine 139, arginine 143, alanine 145, and glycine 146. Tyrosine 207 is a binding site for Fe(3+). Residue histidine 268 participates in Fe(3+) binding. Position 389 is a phosphoserine; by FAM20C (serine 389). Aspartate 411 contacts Fe(3+). An N-linked (GlcNAc...) (complex) asparagine glycan is attached at asparagine 432. Fe(3+) is bound at residue tyrosine 445. The hydrogencarbonate site is built by threonine 471, arginine 475, alanine 477, and glycine 478. Residue asparagine 491 is glycosylated (N-linked (GlcNAc...) asparagine; atypical; partial). Tyrosine 536 provides a ligand contact to Fe(3+). Histidine 604 is a binding site for Fe(3+). A glycan (N-linked (GlcNAc...) (complex) asparagine) is linked at asparagine 630. Serine 685 is subject to Phosphoserine; by FAM20C.

It belongs to the transferrin family. In terms of assembly, monomer. Part of a complex composed of SLC40A1/ferroportin, TF/transferrin and HEPH/hephaestin that transfers iron from cells to transferrin. (Microbial infection) Binds to Neisseria transferrin-binding protein A (tbpA or tbp1). Forms a large complex with TbpA and TbpB. As to quaternary structure, (Microbial infection) Binds to Neisseria transferrin-binding protein B (tbpb or tbp2). Expressed by the liver and secreted in plasma.

Its subcellular location is the secreted. Functionally, transferrins are iron binding transport proteins which can bind two Fe(3+) ions in association with the binding of an anion, usually bicarbonate. It is responsible for the transport of iron from sites of absorption and heme degradation to those of storage and utilization. Serum transferrin may also have a further role in stimulating cell proliferation. (Microbial infection) Serves as an iron source for Neisseria species, which capture the protein and extract its iron for their own use. In terms of biological role, (Microbial infection) Serves as an iron source for parasite T.brucei (strain 427), which capture TF via its own transferrin receptor ESAG6:ESAG7 and extract its iron for its own use. This is Serotransferrin from Homo sapiens (Human).